The chain runs to 455 residues: Argininosuccinate lyase (455 aa).

Belongs to the lyase 1 family. Argininosuccinate lyase subfamily.

The protein localises to the cytoplasm. The catalysed reaction is 2-(N(omega)-L-arginino)succinate = fumarate + L-arginine. It functions in the pathway amino-acid biosynthesis; L-arginine biosynthesis; L-arginine from L-ornithine and carbamoyl phosphate: step 3/3. The protein is Argininosuccinate lyase of Shewanella baltica (strain OS223).